We begin with the raw amino-acid sequence, 320 residues long: Short-chain dehydrogenase/reductase ATR7 (320 aa).

NADP(+) contacts are provided by Ser32, Ile34, Gln55, Asp70, Asn93, Lys134, Tyr167, Lys171, and Thr202. The active-site Proton acceptor is Tyr167. Residue Lys171 is the Lowers pKa of active site Tyr of the active site.

Belongs to the short-chain dehydrogenases/reductases (SDR) family.

The protein operates within mycotoxin biosynthesis. In terms of biological role, short-chain dehydrogenase/reductase; part of the core atranone cluster (CAC) which products are predicted to catalyze most or all steps of mycotoxin atranone synthesis, starting from geranylgeranyl pyrophosphate (GGPP). The initial cyclization of GGPP to dolabellane is probably performed by the terpene cyclase ATR13. The Baeyer-Villiger oxidation near the end of the atranone synthesis, which converts atranones D and E to atranones F and G is predicted to be catalyzed by the monooxygenase ATR8. Of the CAC's other predicted gene products, the reducing PKS ATR6 might synthesize a polyketide chain. This polyketide is probably transferred onto the atranone backbone by the polyketide transferase ATR5. Other predicted CAC products include 4 oxygenases (ATR2, ATR3, ATR4, and ATR14), 3 short-chain reductases (ATR7, ATR9, and ATR10), and a methyltransferase (ATR12). These may all be involved in the various steps of atranone biosynthesis, although their specific roles must await experimental determination. This is Short-chain dehydrogenase/reductase ATR7 from Stachybotrys chlorohalonatus (strain IBT 40285).